The following is a 134-amino-acid chain: Small ribosomal subunit protein uS8c (134 aa).

It belongs to the universal ribosomal protein uS8 family. As to quaternary structure, part of the 30S ribosomal subunit.

It localises to the plastid. The protein localises to the chloroplast. One of the primary rRNA binding proteins, it binds directly to 16S rRNA central domain where it helps coordinate assembly of the platform of the 30S subunit. In Eucalyptus globulus subsp. globulus (Tasmanian blue gum), this protein is Small ribosomal subunit protein uS8c (rps8).